The chain runs to 484 residues: 3-isopropylmalate dehydratase large subunit (484 aa).

[4Fe-4S] cluster is bound by residues Cys352, Cys412, and Cys415. Residues 463–484 (TLSSPSDLDPAPASAAIRTDAA) are disordered. The span at 464–478 (LSSPSDLDPAPASAA) shows a compositional bias: low complexity.

The protein belongs to the aconitase/IPM isomerase family. LeuC type 1 subfamily. As to quaternary structure, heterodimer of LeuC and LeuD. The cofactor is [4Fe-4S] cluster.

It catalyses the reaction (2R,3S)-3-isopropylmalate = (2S)-2-isopropylmalate. It participates in amino-acid biosynthesis; L-leucine biosynthesis; L-leucine from 3-methyl-2-oxobutanoate: step 2/4. In terms of biological role, catalyzes the isomerization between 2-isopropylmalate and 3-isopropylmalate, via the formation of 2-isopropylmaleate. This chain is 3-isopropylmalate dehydratase large subunit, found in Pseudarthrobacter chlorophenolicus (strain ATCC 700700 / DSM 12829 / CIP 107037 / JCM 12360 / KCTC 9906 / NCIMB 13794 / A6) (Arthrobacter chlorophenolicus).